The sequence spans 877 residues: Alanine--tRNA ligase (877 aa).

Residues histidine 567, histidine 571, cysteine 669, and histidine 673 each contribute to the Zn(2+) site.

It belongs to the class-II aminoacyl-tRNA synthetase family. Zn(2+) serves as cofactor.

The protein localises to the cytoplasm. The catalysed reaction is tRNA(Ala) + L-alanine + ATP = L-alanyl-tRNA(Ala) + AMP + diphosphate. In terms of biological role, catalyzes the attachment of alanine to tRNA(Ala) in a two-step reaction: alanine is first activated by ATP to form Ala-AMP and then transferred to the acceptor end of tRNA(Ala). Also edits incorrectly charged Ser-tRNA(Ala) and Gly-tRNA(Ala) via its editing domain. The chain is Alanine--tRNA ligase from Rickettsia prowazekii (strain Madrid E).